The sequence spans 309 residues: Porphobilinogen deaminase (309 aa).

Cys242 bears the S-(dipyrrolylmethanemethyl)cysteine mark.

This sequence belongs to the HMBS family. Monomer. The cofactor is dipyrromethane.

The enzyme catalyses 4 porphobilinogen + H2O = hydroxymethylbilane + 4 NH4(+). Its pathway is porphyrin-containing compound metabolism; protoporphyrin-IX biosynthesis; coproporphyrinogen-III from 5-aminolevulinate: step 2/4. Functionally, tetrapolymerization of the monopyrrole PBG into the hydroxymethylbilane pre-uroporphyrinogen in several discrete steps. This Shewanella woodyi (strain ATCC 51908 / MS32) protein is Porphobilinogen deaminase.